Reading from the N-terminus, the 105-residue chain is Flagellar transcriptional regulator FlhD (105 aa).

The protein belongs to the FlhD family. As to quaternary structure, homodimer; disulfide-linked. Forms a heterohexamer composed of two FlhC and four FlhD subunits. Each FlhC binds a FlhD dimer, forming a heterotrimer, and a hexamer assembles by dimerization of two heterotrimers.

Its subcellular location is the cytoplasm. Functions in complex with FlhC as a master transcriptional regulator that regulates transcription of several flagellar and non-flagellar operons by binding to their promoter region. Activates expression of class 2 flagellar genes, including fliA, which is a flagellum-specific sigma factor that turns on the class 3 genes. Also regulates genes whose products function in a variety of physiological pathways. This chain is Flagellar transcriptional regulator FlhD, found in Nitrosomonas europaea (strain ATCC 19718 / CIP 103999 / KCTC 2705 / NBRC 14298).